Consider the following 241-residue polypeptide: tRNA (guanine-N(7)-)-methyltransferase (241 aa).

Residues glycine 61, glutamate 84, arginine 86, asparagine 117, alanine 118, and leucine 137 each coordinate S-adenosyl-L-methionine. The active site involves aspartate 140. The interval proline 141–lysine 149 is alphaC helix. Residues threonine 215 and glutamate 217 each coordinate S-adenosyl-L-methionine. Residues threonine 215–arginine 223 form an alpha6 helix region.

It belongs to the class I-like SAM-binding methyltransferase superfamily. TrmB family. In terms of assembly, catalytic component of the METTL1-WDR4 complex, composed of mettl1 and wdr4.

Its subcellular location is the nucleus. It carries out the reaction guanosine(46) in tRNA + S-adenosyl-L-methionine = N(7)-methylguanosine(46) in tRNA + S-adenosyl-L-homocysteine. The enzyme catalyses a guanosine in mRNA + S-adenosyl-L-methionine = an N(7)-methylguanosine in mRNA + S-adenosyl-L-homocysteine. It catalyses the reaction a guanosine in miRNA + S-adenosyl-L-methionine = an N(7)-methylguanosine in miRNA + S-adenosyl-L-homocysteine. It functions in the pathway tRNA modification; N(7)-methylguanine-tRNA biosynthesis. Its function is as follows. Catalytic component of METTL1-WDR4 methyltransferase complex that mediates the formation of N(7)-methylguanine in a subset of RNA species, such as tRNAs, mRNAs and microRNAs (miRNAs). Catalyzes the formation of N(7)-methylguanine at position 46 (m7G46) in a large subset of tRNAs that contain the 5'-RAGGU-3' motif within the variable loop. M7G46 interacts with C13-G22 in the D-loop to stabilize tRNA tertiary structure and protect tRNAs from decay. Also acts as a methyltransferase for a subset of internal N(7)-methylguanine in mRNAs. Internal N(7)-methylguanine methylation of mRNAs in response to stress promotes their relocalization to stress granules, thereby suppressing their translation. Also methylates a specific subset of miRNAs. This Danio rerio (Zebrafish) protein is tRNA (guanine-N(7)-)-methyltransferase (mettl1).